The following is a 299-amino-acid chain: CCR4-NOT transcription complex subunit 9 (299 aa).

Position 1 is an N-acetylmethionine (methionine 1).

This sequence belongs to the CNOT9 family. Homodimer. Component of the CCR4-NOT complex; distinct complexes seem to exist that differ in the participation of probably mutually exclusive catalytic subunits. Interacts with MYB, ATF2, RARA, RARB, RARG, RXRA, RXRB and RXRG. Identified in a complex with ATF2 bound to target DNA. Interacts with NANOS2. Directly interacts with ZNF335. In terms of tissue distribution, detected in spleen, thymus, prostate, testis, ovary and intestine.

The protein localises to the nucleus. The protein resides in the cytoplasm. Its subcellular location is the P-body. In terms of biological role, component of the CCR4-NOT complex which is one of the major cellular mRNA deadenylases and is linked to various cellular processes including bulk mRNA degradation, miRNA-mediated repression, translational repression during translational initiation and general transcription regulation. Additional complex functions may be a consequence of its influence on mRNA expression. Involved in down-regulation of MYB- and JUN-dependent transcription. May play a role in cell differentiation. Can bind oligonucleotides, such as poly-G, poly-C or poly-T (in vitro), but the physiological relevance of this is not certain. Does not bind poly-A. Enhances ligand-dependent transcriptional activity of nuclear hormone receptors, including RARA, expect ESR1-mediated transcription that is not only slightly increased, if at all. In Homo sapiens (Human), this protein is CCR4-NOT transcription complex subunit 9.